Here is a 456-residue protein sequence, read N- to C-terminus: Bifunctional protein GlmU (456 aa).

Residues 1–231 (MERTCLAIIL…EEELTGCNTR (231 aa)) form a pyrophosphorylase region. UDP-N-acetyl-alpha-D-glucosamine-binding positions include 10-13 (LAAG), K24, Q77, and 82-83 (GT). Mg(2+) is bound at residue D107. The UDP-N-acetyl-alpha-D-glucosamine site is built by G143, E157, N172, and N229. N229 contacts Mg(2+). The linker stretch occupies residues 232–252 (AELAYIERLWQQRRRQELMLA). An N-acetyltransferase region spans residues 253–456 (GVSMVAPETV…AARKKVKAAE (204 aa)). UDP-N-acetyl-alpha-D-glucosamine contacts are provided by R318 and K336. The active-site Proton acceptor is H348. Positions 351 and 362 each coordinate UDP-N-acetyl-alpha-D-glucosamine. Residues A365, 371-372 (NY), S390, S408, and R425 each bind acetyl-CoA.

This sequence in the N-terminal section; belongs to the N-acetylglucosamine-1-phosphate uridyltransferase family. It in the C-terminal section; belongs to the transferase hexapeptide repeat family. As to quaternary structure, homotrimer. The cofactor is Mg(2+).

The protein localises to the cytoplasm. The enzyme catalyses alpha-D-glucosamine 1-phosphate + acetyl-CoA = N-acetyl-alpha-D-glucosamine 1-phosphate + CoA + H(+). It catalyses the reaction N-acetyl-alpha-D-glucosamine 1-phosphate + UTP + H(+) = UDP-N-acetyl-alpha-D-glucosamine + diphosphate. It participates in nucleotide-sugar biosynthesis; UDP-N-acetyl-alpha-D-glucosamine biosynthesis; N-acetyl-alpha-D-glucosamine 1-phosphate from alpha-D-glucosamine 6-phosphate (route II): step 2/2. The protein operates within nucleotide-sugar biosynthesis; UDP-N-acetyl-alpha-D-glucosamine biosynthesis; UDP-N-acetyl-alpha-D-glucosamine from N-acetyl-alpha-D-glucosamine 1-phosphate: step 1/1. Its pathway is bacterial outer membrane biogenesis; LPS lipid A biosynthesis. Functionally, catalyzes the last two sequential reactions in the de novo biosynthetic pathway for UDP-N-acetylglucosamine (UDP-GlcNAc). The C-terminal domain catalyzes the transfer of acetyl group from acetyl coenzyme A to glucosamine-1-phosphate (GlcN-1-P) to produce N-acetylglucosamine-1-phosphate (GlcNAc-1-P), which is converted into UDP-GlcNAc by the transfer of uridine 5-monophosphate (from uridine 5-triphosphate), a reaction catalyzed by the N-terminal domain. The protein is Bifunctional protein GlmU of Sinorhizobium fredii (strain NBRC 101917 / NGR234).